Here is a 232-residue protein sequence, read N- to C-terminus: uncharacterized protein (232 aa).

It is found in the cytoplasm. It localises to the nucleus. This is an uncharacterized protein from Saccharomyces cerevisiae (strain ATCC 204508 / S288c) (Baker's yeast).